The chain runs to 194 residues: A-type ATP synthase subunit E (194 aa).

This sequence belongs to the V-ATPase E subunit family. As to quaternary structure, has multiple subunits with at least A(3), B(3), C, D, E, F, H, I and proteolipid K(x).

It is found in the cell membrane. Its function is as follows. Component of the A-type ATP synthase that produces ATP from ADP in the presence of a proton gradient across the membrane. This is A-type ATP synthase subunit E from Saccharolobus islandicus (strain Y.N.15.51 / Yellowstone #2) (Sulfolobus islandicus).